A 90-amino-acid chain; its full sequence is Cell division protein CrgA (90 aa).

Residues 1–25 (MPKARVTKNETAPVSSNPSANRTPV) form a disordered region. The segment covering 9 to 22 (NETAPVSSNPSANR) has biased composition (polar residues). 2 helical membrane-spanning segments follow: residues 38-58 (VIMF…YLVG) and 67-87 (LGAW…LMTM).

Belongs to the CrgA family.

Its subcellular location is the cell membrane. Functionally, involved in cell division. The sequence is that of Cell division protein CrgA from Corynebacterium glutamicum (strain ATCC 13032 / DSM 20300 / JCM 1318 / BCRC 11384 / CCUG 27702 / LMG 3730 / NBRC 12168 / NCIMB 10025 / NRRL B-2784 / 534).